A 598-amino-acid polypeptide reads, in one-letter code: Probable translation initiation factor IF-2 (598 aa).

The tr-type G domain maps to 3–225 (LRCPIVSVLG…GLAQKFLEQK (223 aa)). Positions 12–19 (GHVDHGKT) are G1. 12-19 (GHVDHGKT) lines the GTP pocket. Residues 37–41 (GITQH) are G2. The tract at residues 76 to 79 (DTPG) is G3. Residues 76-80 (DTPGH) and 130-133 (NKVD) contribute to the GTP site. A G4 region spans residues 130–133 (NKVD). Positions 200–202 (SAM) are G5.

This sequence belongs to the TRAFAC class translation factor GTPase superfamily. Classic translation factor GTPase family. IF-2 subfamily.

Functionally, function in general translation initiation by promoting the binding of the formylmethionine-tRNA to ribosomes. Seems to function along with eIF-2. The polypeptide is Probable translation initiation factor IF-2 (Methanococcus maripaludis (strain C7 / ATCC BAA-1331)).